The primary structure comprises 454 residues: Guanine deaminase (454 aa).

Histidine 82 and histidine 84 together coordinate Zn(2+). Substrate is bound by residues 84–87, 213–214, 240–243, and aspartate 330; these read HASQ, RF, and HISE. Residues histidine 240 and aspartate 330 each contribute to the Zn(2+) site. Phosphoserine is present on serine 453.

The protein belongs to the metallo-dependent hydrolases superfamily. ATZ/TRZ family. In terms of assembly, homodimer. The cofactor is Zn(2+).

The enzyme catalyses guanine + H2O + H(+) = xanthine + NH4(+). It functions in the pathway purine metabolism; guanine degradation; xanthine from guanine: step 1/1. Its function is as follows. Catalyzes the hydrolytic deamination of guanine, producing xanthine and ammonia. The protein is Guanine deaminase (GDA) of Pongo abelii (Sumatran orangutan).